The sequence spans 262 residues: 14-3-3-like protein A (262 aa).

A disordered region spans residues 240 to 262 (DNAEEGGDEIKEAASKPEGEGHS). The segment covering 247–262 (DEIKEAASKPEGEGHS) has biased composition (basic and acidic residues).

The protein belongs to the 14-3-3 family.

The chain is 14-3-3-like protein A from Hordeum vulgare (Barley).